Consider the following 170-residue polypeptide: Acireductone dioxygenase (170 aa).

Fe(2+)-binding residues include His-99, His-101, Glu-105, and His-144. Positions 99, 101, 105, and 144 each coordinate Ni(2+).

It belongs to the acireductone dioxygenase (ARD) family. Monomer. Fe(2+) serves as cofactor. Ni(2+) is required as a cofactor.

The catalysed reaction is 1,2-dihydroxy-5-(methylsulfanyl)pent-1-en-3-one + O2 = 3-(methylsulfanyl)propanoate + CO + formate + 2 H(+). It catalyses the reaction 1,2-dihydroxy-5-(methylsulfanyl)pent-1-en-3-one + O2 = 4-methylsulfanyl-2-oxobutanoate + formate + 2 H(+). The protein operates within amino-acid biosynthesis; L-methionine biosynthesis via salvage pathway; L-methionine from S-methyl-5-thio-alpha-D-ribose 1-phosphate: step 5/6. Its function is as follows. Catalyzes 2 different reactions between oxygen and the acireductone 1,2-dihydroxy-3-keto-5-methylthiopentene (DHK-MTPene) depending upon the metal bound in the active site. Fe-containing acireductone dioxygenase (Fe-ARD) produces formate and 2-keto-4-methylthiobutyrate (KMTB), the alpha-ketoacid precursor of methionine in the methionine recycle pathway. Ni-containing acireductone dioxygenase (Ni-ARD) produces methylthiopropionate, carbon monoxide and formate, and does not lie on the methionine recycle pathway. The protein is Acireductone dioxygenase of Bacillus thuringiensis subsp. konkukian (strain 97-27).